The sequence spans 115 residues: Colicin-Ib immunity protein (115 aa).

Helical transmembrane passes span 7–27 (VKYL…FYLG), 38–58 (FYAF…MRII), and 87–107 (IFEL…LIFI).

It is found in the cell membrane. In terms of biological role, this protein is able to protect a cell, which harbors the plasmid IncI1 ColIb-P9 encoding colicin Ib, against colicin Ib. The chain is Colicin-Ib immunity protein from Escherichia coli.